The chain runs to 404 residues: Probable tRNA sulfurtransferase (404 aa).

One can recognise a THUMP domain in the interval 60–165 (RSVIEALKPV…DEAAYLSHED (106 aa)). Residues 183–184 (ML), 208–209 (HF), Arg-265, Gly-287, and Gln-296 each bind ATP.

The protein belongs to the ThiI family.

It localises to the cytoplasm. The catalysed reaction is [ThiI sulfur-carrier protein]-S-sulfanyl-L-cysteine + a uridine in tRNA + 2 reduced [2Fe-2S]-[ferredoxin] + ATP + H(+) = [ThiI sulfur-carrier protein]-L-cysteine + a 4-thiouridine in tRNA + 2 oxidized [2Fe-2S]-[ferredoxin] + AMP + diphosphate. The enzyme catalyses [ThiS sulfur-carrier protein]-C-terminal Gly-Gly-AMP + S-sulfanyl-L-cysteinyl-[cysteine desulfurase] + AH2 = [ThiS sulfur-carrier protein]-C-terminal-Gly-aminoethanethioate + L-cysteinyl-[cysteine desulfurase] + A + AMP + 2 H(+). The protein operates within cofactor biosynthesis; thiamine diphosphate biosynthesis. Catalyzes the ATP-dependent transfer of a sulfur to tRNA to produce 4-thiouridine in position 8 of tRNAs, which functions as a near-UV photosensor. Also catalyzes the transfer of sulfur to the sulfur carrier protein ThiS, forming ThiS-thiocarboxylate. This is a step in the synthesis of thiazole, in the thiamine biosynthesis pathway. The sulfur is donated as persulfide by IscS. This is Probable tRNA sulfurtransferase from Streptococcus equi subsp. equi (strain 4047).